Here is a 251-residue protein sequence, read N- to C-terminus: Flap endonuclease Xni (251 aa).

A Mg(2+)-binding site is contributed by Asp104. Residues 160 to 249 form the 5'-3' exonuclease domain; it reads VTPEQLADYW…LDGNLQQLRL (90 aa). K(+) is bound by residues Leu171, Ala172, Pro180, Val182, and Ile185. The tract at residues 184 to 189 is interaction with DNA; it reads GIGPKS.

Belongs to the Xni family. Requires Mg(2+) as cofactor. K(+) is required as a cofactor.

Functionally, has flap endonuclease activity. During DNA replication, flap endonucleases cleave the 5'-overhanging flap structure that is generated by displacement synthesis when DNA polymerase encounters the 5'-end of a downstream Okazaki fragment. This is Flap endonuclease Xni from Klebsiella pneumoniae subsp. pneumoniae (strain ATCC 700721 / MGH 78578).